Here is a 276-residue protein sequence, read N- to C-terminus: 3-methyl-2-oxobutanoate hydroxymethyltransferase (276 aa).

Residues Asp-46 and Asp-85 each contribute to the Mg(2+) site. Residues Asp-46–Ser-47, Asp-85, and Lys-115 contribute to the 3-methyl-2-oxobutanoate site. Residue Glu-117 participates in Mg(2+) binding. Glu-184 acts as the Proton acceptor in catalysis.

Belongs to the PanB family. As to quaternary structure, homodecamer; pentamer of dimers. It depends on Mg(2+) as a cofactor.

The protein localises to the cytoplasm. The enzyme catalyses 3-methyl-2-oxobutanoate + (6R)-5,10-methylene-5,6,7,8-tetrahydrofolate + H2O = 2-dehydropantoate + (6S)-5,6,7,8-tetrahydrofolate. The protein operates within cofactor biosynthesis; (R)-pantothenate biosynthesis; (R)-pantoate from 3-methyl-2-oxobutanoate: step 1/2. In terms of biological role, catalyzes the reversible reaction in which hydroxymethyl group from 5,10-methylenetetrahydrofolate is transferred onto alpha-ketoisovalerate to form ketopantoate. The sequence is that of 3-methyl-2-oxobutanoate hydroxymethyltransferase from Heliobacterium modesticaldum (strain ATCC 51547 / Ice1).